The chain runs to 421 residues: UDP-N-acetylglucosamine 1-carboxyvinyltransferase (421 aa).

Phosphoenolpyruvate is bound at residue 22 to 23 (KN). Arg-93 contributes to the UDP-N-acetyl-alpha-D-glucosamine binding site. Cys-117 (proton donor) is an active-site residue. At Cys-117 the chain carries 2-(S-cysteinyl)pyruvic acid O-phosphothioketal. UDP-N-acetyl-alpha-D-glucosamine is bound by residues 122-126 (RPVDL), Asp-308, and Ile-330.

Belongs to the EPSP synthase family. MurA subfamily.

The protein localises to the cytoplasm. The enzyme catalyses phosphoenolpyruvate + UDP-N-acetyl-alpha-D-glucosamine = UDP-N-acetyl-3-O-(1-carboxyvinyl)-alpha-D-glucosamine + phosphate. It participates in cell wall biogenesis; peptidoglycan biosynthesis. In terms of biological role, cell wall formation. Adds enolpyruvyl to UDP-N-acetylglucosamine. The polypeptide is UDP-N-acetylglucosamine 1-carboxyvinyltransferase (Pseudomonas savastanoi pv. phaseolicola (strain 1448A / Race 6) (Pseudomonas syringae pv. phaseolicola (strain 1448A / Race 6))).